Consider the following 574-residue polypeptide: Aspartate--tRNA ligase (574 aa).

Glu172 contacts L-aspartate. The interval Gln196 to Lys199 is aspartate. Arg218 provides a ligand contact to L-aspartate. ATP contacts are provided by residues Arg218–Glu220 and Gln227. L-aspartate is bound at residue His453. Glu487 is an ATP binding site. Arg494 is a binding site for L-aspartate. Gly539 to Arg542 is an ATP binding site.

Belongs to the class-II aminoacyl-tRNA synthetase family. Type 1 subfamily. In terms of assembly, homodimer.

The protein resides in the cytoplasm. It carries out the reaction tRNA(Asp) + L-aspartate + ATP = L-aspartyl-tRNA(Asp) + AMP + diphosphate. Catalyzes the attachment of L-aspartate to tRNA(Asp) in a two-step reaction: L-aspartate is first activated by ATP to form Asp-AMP and then transferred to the acceptor end of tRNA(Asp). In Blochmanniella pennsylvanica (strain BPEN), this protein is Aspartate--tRNA ligase.